The primary structure comprises 780 residues: Chloride channel protein CLC-b (780 aa).

The interval 1 to 28 (MVEEDLNQIGGNSNYNGEGGDPESNTLN) is disordered. Transmembrane regions (helical) follow at residues 87-107 (TLAC…NLAV), 130-150 (GLMV…VLCV), 177-197 (FGAT…AAGL), 205-225 (LVHI…DNHR), 247-267 (GSAA…LFAL), 277-297 (ALLW…REFI), 327-347 (VTDI…GSLY), 370-390 (VLLS…LPFL), 452-472 (MGSL…TFGI), 477-497 (GLFL…GAAM), 509-529 (AVLG…SLCV), and 530-550 (IFLE…VLLI). 2 consecutive CBS domains span residues 594–663 (AKPP…FLTE) and 708–770 (TNTT…AFPL). The helical transmembrane segment at 735-755 (HLLIVPKIQASGMCPVVGILT) threads the bilayer.

This sequence belongs to the chloride channel (TC 2.A.49) family. In terms of assembly, homodimer. Interacts with PP2A5. As to expression, broadly expressed in the plant.

It is found in the membrane. Functionally, voltage-gated chloride channel. The polypeptide is Chloride channel protein CLC-b (CLC-B) (Arabidopsis thaliana (Mouse-ear cress)).